Consider the following 1399-residue polypeptide: DNA-directed RNA polymerase subunit beta' (1399 aa).

4 residues coordinate Zn(2+): C70, C72, C85, and C88. D460, D462, and D464 together coordinate Mg(2+). Zn(2+) contacts are provided by C814, C888, C895, and C898.

This sequence belongs to the RNA polymerase beta' chain family. As to quaternary structure, the RNAP catalytic core consists of 2 alpha, 1 beta, 1 beta' and 1 omega subunit. When a sigma factor is associated with the core the holoenzyme is formed, which can initiate transcription. Mg(2+) is required as a cofactor. Zn(2+) serves as cofactor.

The enzyme catalyses RNA(n) + a ribonucleoside 5'-triphosphate = RNA(n+1) + diphosphate. DNA-dependent RNA polymerase catalyzes the transcription of DNA into RNA using the four ribonucleoside triphosphates as substrates. The polypeptide is DNA-directed RNA polymerase subunit beta' (Stutzerimonas stutzeri (strain A1501) (Pseudomonas stutzeri)).